The sequence spans 317 residues: Putative 2-hydroxyacid dehydrogenase SAOUHSC_02577 (317 aa).

NAD(+)-binding positions include 155–156 (EI), 234–236 (ASR), and Asp-260. Arg-236 is an active-site residue. Glu-265 is an active-site residue. Residue His-283 is the Proton donor of the active site. 283-286 (HIGN) lines the NAD(+) pocket.

This sequence belongs to the D-isomer specific 2-hydroxyacid dehydrogenase family.

This chain is Putative 2-hydroxyacid dehydrogenase SAOUHSC_02577, found in Staphylococcus aureus (strain NCTC 8325 / PS 47).